Reading from the N-terminus, the 239-residue chain is DNA repair protein RecO (239 aa).

It belongs to the RecO family.

Functionally, involved in DNA repair and RecF pathway recombination. The chain is DNA repair protein RecO from Stenotrophomonas maltophilia (strain K279a).